A 395-amino-acid polypeptide reads, in one-letter code: MPPKKNVVEEKPALIGRLGTNLKVGILGLPNVGKSTFFNVLTKSEAQAENFPFCTIDPNESRVAVQDDRFDWLVNHYKPASKVPAFLNVTDIAGLVKGASEGQGLGNAFLSHVSACDALFHLCRAFDDDDVTHVEGEVDPVRDLEIISNELFAKDLQFIDGPLDKVEKLFTRANDKTKKIEYDTLVRVKKCLEEKKPVRQELWNEKEIEILNKHLFLTAKPIVYLVNLSEKDYIRKKNKWLPKIKAWIDTNDAGAVLIPFSGAFELKLLDMPEDERQKYLKEQGVTSNLDKIVHTGYKALQLEYFFTSGEDEVKAWTIQVGTPAPKAAGRIHTDFEKGFIMAEVMKVADLIELGDEAKCKAGGKYRQQGKTYIVQDGDVIFFKFNAGAGLQAKKK.

In terms of domain architecture, OBG-type G spans 22–280 (LKVGILGLPN…MPEDERQKYL (259 aa)). Residue 31–36 (NVGKST) coordinates ATP. Residues Ser35 and Thr55 each coordinate Mg(2+). Leu228 is a binding site for ATP. Positions 301–384 (QLEYFFTSGE…QDGDVIFFKF (84 aa)) constitute a TGS domain.

The protein belongs to the TRAFAC class OBG-HflX-like GTPase superfamily. OBG GTPase family. YchF/OLA1 subfamily. As to quaternary structure, monomer. Mg(2+) is required as a cofactor. As to expression, expressed in the nervous system, pharyngeal muscles and intestine (at protein level).

Its subcellular location is the cytoplasm. Functionally, hydrolyzes ATP, and can also hydrolyze GTP with lower efficiency. Has lower affinity for GTP. Plays a role in regulating starvation-induced thermotaxis responses in AFD thermosensory neurons. In Caenorhabditis elegans, this protein is Obg-like ATPase 1.